Consider the following 152-residue polypeptide: Ninjurin-1 (152 aa).

N-acetylmethionine is present on M1. Residues M1–L10 are compositionally biased toward acidic residues. The segment at M1 to W29 is disordered. The Extracellular segment spans residues M1–V78. A phosphoserine mark is found at S18 and S21. The tract at residues P26–N37 is N-terminal adhesion motif. The interval H40–E69 is required to induce plasma membrane rupture. The helix alpha1 stretch occupies residues K44–A55. The interval M58 to F74 is helix alpha2. N-linked (GlcNAc...) asparagine glycosylation is present at N60. A helical transmembrane segment spans residues P79–K103. Topologically, residues Y104 to A113 are cytoplasmic. The chain crosses the membrane as a helical span at residues K114–A138. Residues F139 to Q152 are Extracellular-facing.

This sequence belongs to the ninjurin family. Homodimer; in absence of death stimuli, forms an inactive homodimer. Homooligomer; in response to death stimuli, homooligomerizes into long, highly branched filaments and large, ring-shaped structures in the membrane. Cleaved by MMP9 protease to generate the Secreted ninjurin-1 form. Post-translationally, N-linked glycosylation is required for homooligomerization.

The protein localises to the cell membrane. It is found in the synaptic cell membrane. The protein resides in the secreted. With respect to regulation, in response to death stimuli, homooligomerizes and disrupts membrane integrity by introducing the hydrophilic faces of alpha1 and alpha2 helices into the hydrophobic membrane. Homooligomerization and ability to mediate plasma membrane rupture is inhibited by glycine; it is unclear whether glycine directly or indirectly inhibits homooligomerization. In normal conditions, NINJ1 is autoinhibited via formation of a homodimer: in the inactive homodimer, the alpha1 and alpha2 helices (residues 44-74) form a single transmembrane region without a kink, in which hydrophilic faces of alpha1 and alpha2 helices are sequestered. In terms of biological role, effector of various programmed cell death, such as pyroptosis and necroptosis, which mediates plasma membrane rupture (cytolysis). Oligomerizes in response to death stimuli and forms ring-like structures on the plasma membrane: acts by cutting and shedding membrane disks, like a cookie cutter, leading to membrane damage and loss that cannot be repaired by the cell. Plasma membrane rupture leads to release intracellular molecules named damage-associated molecular patterns (DAMPs) that propagate the inflammatory response. Mechanistically, mediates plasma membrane rupture by introducing hydrophilic faces of 2 alpha helices into the hydrophobic membrane. Induces plasma membrane rupture downstream of Gasdermin (GSDMA, GSDMB, GSDMC, GSDMD, or GSDME) or MLKL during pyroptosis or necroptosis, respectively. Acts as an effector of PANoptosis downstream of CASP1, CASP4, CASP8 and RIPK3. Also induces plasma membrane rupture in response to cell swelling caused by osmotic stress and ferroptosis downstream of lipid peroxidation. Acts as a regulator of Toll-like receptor 4 (TLR4) signaling triggered by lipopolysaccharide (LPS) during systemic inflammation; directly binds LPS. Involved in leukocyte migration during inflammation by promoting transendothelial migration of macrophages via homotypic binding. Promotes the migration of monocytes across the brain endothelium to central nervous system inflammatory lesions. Also acts as a homophilic transmembrane adhesion molecule involved in various processes such as axonal growth, cell chemotaxis and angiogenesis. Promotes cell adhesion by mediating homophilic interactions via its extracellular N-terminal adhesion motif (N-NAM). Involved in the progression of the inflammatory stress by promoting cell-to-cell interactions between immune cells and endothelial cells. Plays a role in nerve regeneration by promoting maturation of Schwann cells. Acts as a regulator of angiogenesis. Promotes the formation of new vessels by mediating the interaction between capillary pericyte cells and endothelial cells. Also mediates vascular functions in penile tissue as well as vascular formation. Promotes osteoclasts development by enhancing the survival of prefusion osteoclasts. Also involved in striated muscle growth and differentiation. Also involved in cell senescence in a p53/TP53 manner, possibly by acting as an indirect regulator of p53/TP53 mRNA translation. Functionally, secreted form generated by cleavage, which has chemotactic activity. Acts as an anti-inflammatory mediator by promoting monocyte recruitment, thereby ameliorating atherosclerosis. The protein is Ninjurin-1 of Mus musculus (Mouse).